Here is a 385-residue protein sequence, read N- to C-terminus: 1-deoxy-D-xylulose 5-phosphate reductoisomerase (385 aa).

The NADPH site is built by Thr-11, Gly-12, Ser-13, Ile-14, Asn-39, and Asn-123. Lys-124 is a binding site for 1-deoxy-D-xylulose 5-phosphate. Glu-125 contributes to the NADPH binding site. Mn(2+) is bound at residue Asp-149. Residues Ser-150, Glu-151, Ser-174, and His-197 each coordinate 1-deoxy-D-xylulose 5-phosphate. Glu-151 contacts Mn(2+). NADPH is bound at residue Gly-203. Positions 210, 215, 216, and 219 each coordinate 1-deoxy-D-xylulose 5-phosphate. Position 219 (Glu-219) interacts with Mn(2+).

It belongs to the DXR family. It depends on Mg(2+) as a cofactor. The cofactor is Mn(2+).

It carries out the reaction 2-C-methyl-D-erythritol 4-phosphate + NADP(+) = 1-deoxy-D-xylulose 5-phosphate + NADPH + H(+). Its pathway is isoprenoid biosynthesis; isopentenyl diphosphate biosynthesis via DXP pathway; isopentenyl diphosphate from 1-deoxy-D-xylulose 5-phosphate: step 1/6. Functionally, catalyzes the NADPH-dependent rearrangement and reduction of 1-deoxy-D-xylulose-5-phosphate (DXP) to 2-C-methyl-D-erythritol 4-phosphate (MEP). The protein is 1-deoxy-D-xylulose 5-phosphate reductoisomerase of Porphyromonas gingivalis (strain ATCC 33277 / DSM 20709 / CIP 103683 / JCM 12257 / NCTC 11834 / 2561).